We begin with the raw amino-acid sequence, 150 residues long: S-protein homolog 24 (150 aa).

Residue Asn122 is glycosylated (N-linked (GlcNAc...) asparagine).

It belongs to the plant self-incompatibility (S1) protein family.

The protein localises to the secreted. This chain is S-protein homolog 24, found in Arabidopsis thaliana (Mouse-ear cress).